Reading from the N-terminus, the 595-residue chain is MLPVQTSNLAAAFTDAVRALAPADATLPAVTFERPKVAAHGDLACNVAMQVARALKSNPRELAQRIVDAVQADTRAQGLVQAMEIAGPGFINLRLTPAAKADVLRAVLAEGDHYGARERGVHGQVLVEFVSANPTGPLHVGHGRQAALGDALANLLSWQGWHVHREFYYNDAGVQIQTLALSVQARARGLKPGDASWPEAAYNGDYIADIAADFLAGKTVSASDGEPVTASGNVEDIDSIRKFAVTYLRNEQDIDLQAFGVKFDRYYLESSLYSDGRVEAAVQSLVGKGKTYESEGALWLRTTDDGDDKDRVMKKSDGTYTYFVPDVAYHTTKWERGFTKVINVQGSDHHGTIARVRAGLQGLDMGIPQGYPDYVLHKMVTVMKNGEEVKISKRAGSYVTVRDLIEWSNGGDETIRGCLDTGVADWPQHFTRGRDAVRFFLLSRKADTEFVFDVDLALKQNDENPVYYVQYAHARICSIFESWGGADWEARLAELAGADLSAVTGPEASAQAQALGRRLAEFPDMLSGAAAELAPHAVAFYLRDLAGDFHAFYNADRVLVDDEAVKRARLALLAATRQVLRNGLAVIGVSAPRRM.

Residues Ala132 to His142 carry the 'HIGH' region motif.

The protein belongs to the class-I aminoacyl-tRNA synthetase family. As to quaternary structure, monomer.

It localises to the cytoplasm. The catalysed reaction is tRNA(Arg) + L-arginine + ATP = L-arginyl-tRNA(Arg) + AMP + diphosphate. The sequence is that of Arginine--tRNA ligase from Cupriavidus necator (strain ATCC 17699 / DSM 428 / KCTC 22496 / NCIMB 10442 / H16 / Stanier 337) (Ralstonia eutropha).